The following is a 74-amino-acid chain: Cytochrome c oxidase assembly factor 5 (74 aa).

The region spanning 27–65 is the CHCH domain; the sequence is QSDCVVQEGKSPRQCLKEGYCNSLKYAFFECKRSVLDNR. Positions 30-41 match the Cx10C motif motif; the sequence is CVVQEGKSPRQC. 2 disulfide bridges follow: cysteine 30-cysteine 57 and cysteine 41-cysteine 47. Residue serine 37 is modified to Phosphoserine. Positions 47 to 57 match the Cx9C motif motif; that stretch reads CNSLKYAFFEC.

Belongs to the PET191 family.

Functionally, involved in an early step of the mitochondrial complex IV assembly process. This Homo sapiens (Human) protein is Cytochrome c oxidase assembly factor 5 (COA5).